Consider the following 588-residue polypeptide: Histone deacetylase 9 (588 aa).

Ser22 bears the Phosphoserine mark. Positions 23–27 (PLDLR) are interaction with CTBP1. Residues 110–147 (RQEQEVERHRREQQLPPLRGKDRGRERAVASTEVKQKL) show a composition bias toward basic and acidic residues. Disordered stretches follow at residues 110-170 (RQEQ…HSVG), 183-242 (TSLD…SSPL), and 264-301 (SSVS…PHPE). The interaction with MEF2 stretch occupies residues 136-154 (RAVASTEVKQKLQEFLLSK). Composition is skewed to polar residues over residues 154 to 166 (KSAT…NGKN) and 185 to 199 (LDQS…SPSY). The interval 175–343 (LWYTAAHHTS…LPAVPSPLNA (169 aa)) is interaction with MAPK10. A compositionally biased stretch (basic and acidic residues) spans 208-219 (DSKDDFPLRKTA). Positions 218–261 (TASEPNLKVRSRLKQKVAERRSSPLLRRKDGNLVTSFKKRVFEV) are interaction with ETV6. Ser220 carries the post-translational modification Phosphoserine. Basic and acidic residues predominate over residues 233 to 242 (KVAERRSSPL). A Phosphoserine; by DYRK1B modification is found at Ser240. The segment covering 264–284 (SSVSSSSPGSGPSSPNNGPAG) has biased composition (low complexity). A Phosphoserine modification is found at Ser450. The tract at residues 493–533 (QLKQPGSHLEEAEEELQGDQSMEDRAASKDNSARSDSSACV) is disordered. Residues 514-525 (MEDRAASKDNSA) are compositionally biased toward basic and acidic residues. Ser552 carries the phosphoserine modification.

The protein belongs to the histone deacetylase family. HD type 2 subfamily. As to quaternary structure, homodimer. Interacts with ETV6. Interacts with MEF2, HDAC1, HDAC3, HDAC4, HDAC5, CTBP1 and MAPK10. The phosphorylated form interacts with 14-3-3. Interacts with FOXP3 in the absence of T-cell stimulation. In terms of processing, sumoylated. Phosphorylated on Ser-220 and Ser-450; which promotes 14-3-3-binding, impairs interaction with MEF2, and antagonizes antimyogenic activity. Phosphorylated on Ser-240 by DYRK1B; which impairs nuclear accumulation. Phosphorylated by the PKC kinases PKN1 and PKN2, impairing nuclear import. As to expression, expressed at high levels in heart, brain and spleen. Expressed in skeletal muscle.

It is found in the nucleus. The catalysed reaction is N(6)-acetyl-L-lysyl-[histone] + H2O = L-lysyl-[histone] + acetate. Its function is as follows. Devoided of intrinsic deacetylase activity, promotes the deacetylation of lysine residues on the N-terminal part of the core histones (H2A, H2B, H3 and H4) by recruiting HDAC1 and HDAC3. Histone deacetylation gives a tag for epigenetic repression and plays an important role in transcriptional regulation, cell cycle progression and developmental events. Represses MEF2-dependent transcription, inhibits skeletal myogenesis and may be involved in heart development. Protects neurons from apoptosis, both by inhibiting JUN phosphorylation by MAPK10 and by repressing JUN transcription via HDAC1 recruitment to JUN promoter. This Mus musculus (Mouse) protein is Histone deacetylase 9 (Hdac9).